The primary structure comprises 126 residues: Large ribosomal subunit protein bL12 (126 aa).

Belongs to the bacterial ribosomal protein bL12 family. As to quaternary structure, homodimer. Part of the ribosomal stalk of the 50S ribosomal subunit. Forms a multimeric L10(L12)X complex, where L10 forms an elongated spine to which 2 to 4 L12 dimers bind in a sequential fashion. Binds GTP-bound translation factors.

In terms of biological role, forms part of the ribosomal stalk which helps the ribosome interact with GTP-bound translation factors. Is thus essential for accurate translation. This chain is Large ribosomal subunit protein bL12, found in Koribacter versatilis (strain Ellin345).